A 292-amino-acid chain; its full sequence is Putative pyruvate, phosphate dikinase regulatory protein (292 aa).

An ADP-binding site is contributed by 155-162; that stretch reads GVSRSSKT.

Belongs to the pyruvate, phosphate/water dikinase regulatory protein family. PDRP subfamily.

It carries out the reaction N(tele)-phospho-L-histidyl/L-threonyl-[pyruvate, phosphate dikinase] + ADP = N(tele)-phospho-L-histidyl/O-phospho-L-threonyl-[pyruvate, phosphate dikinase] + AMP + H(+). The enzyme catalyses N(tele)-phospho-L-histidyl/O-phospho-L-threonyl-[pyruvate, phosphate dikinase] + phosphate + H(+) = N(tele)-phospho-L-histidyl/L-threonyl-[pyruvate, phosphate dikinase] + diphosphate. Functionally, bifunctional serine/threonine kinase and phosphorylase involved in the regulation of the pyruvate, phosphate dikinase (PPDK) by catalyzing its phosphorylation/dephosphorylation. In Acidiphilium cryptum (strain JF-5), this protein is Putative pyruvate, phosphate dikinase regulatory protein.